Reading from the N-terminus, the 351-residue chain is Dihydroorotate dehydrogenase (quinone) (351 aa).

FMN-binding positions include alanine 61–lysine 65 and threonine 85. Lysine 65 serves as a coordination point for substrate. Asparagine 110–phenylalanine 114 is a binding site for substrate. FMN-binding residues include asparagine 139 and asparagine 172. Position 172 (asparagine 172) interacts with substrate. The active-site Nucleophile is serine 175. Position 177 (asparagine 177) interacts with substrate. FMN is bound by residues lysine 217 and threonine 245. Residue asparagine 246 to threonine 247 participates in substrate binding. FMN contacts are provided by residues glycine 268, glycine 297, and tyrosine 318 to threonine 319.

The protein belongs to the dihydroorotate dehydrogenase family. Type 2 subfamily. Monomer. The cofactor is FMN.

It localises to the cell membrane. The catalysed reaction is (S)-dihydroorotate + a quinone = orotate + a quinol. It participates in pyrimidine metabolism; UMP biosynthesis via de novo pathway; orotate from (S)-dihydroorotate (quinone route): step 1/1. Functionally, catalyzes the conversion of dihydroorotate to orotate with quinone as electron acceptor. The sequence is that of Dihydroorotate dehydrogenase (quinone) from Xylella fastidiosa (strain M23).